Here is a 311-residue protein sequence, read N- to C-terminus: Pyrimidine-specific ribonucleoside hydrolase RihA (311 aa).

Residue H240 is part of the active site.

It belongs to the IUNH family. RihA subfamily.

Its function is as follows. Hydrolyzes with equal efficiency cytidine or uridine to ribose and cytosine or uracil, respectively. The polypeptide is Pyrimidine-specific ribonucleoside hydrolase RihA (Escherichia fergusonii (strain ATCC 35469 / DSM 13698 / CCUG 18766 / IAM 14443 / JCM 21226 / LMG 7866 / NBRC 102419 / NCTC 12128 / CDC 0568-73)).